Here is a 276-residue protein sequence, read N- to C-terminus: Omega-amidase NIT2 (276 aa).

In terms of domain architecture, CN hydrolase spans 4-248; that stretch reads FRLALIQLQV…ETILYSDIDL (245 aa). S26 carries the phosphoserine modification. E43 acts as the Proton acceptor in catalysis. Residue K68 is modified to N6-acetyllysine; alternate. N6-succinyllysine; alternate is present on K68. Residue K112 is the Proton donor of the active site. Residues K123 and K130 each carry the N6-succinyllysine modification. The Nucleophile role is filled by C153.

Belongs to the carbon-nitrogen hydrolase superfamily. NIT1/NIT2 family. In terms of assembly, homodimer.

The protein localises to the cytoplasm. It catalyses the reaction a monoamide of a dicarboxylate + H2O = a dicarboxylate + NH4(+). The catalysed reaction is 2-oxoglutaramate + H2O = 2-oxoglutarate + NH4(+). The enzyme catalyses 2-oxosuccinamate + H2O = oxaloacetate + NH4(+). In terms of biological role, has omega-amidase activity. The role of omega-amidase is to remove potentially toxic intermediates by converting 2-oxoglutaramate and 2-oxosuccinamate to biologically useful 2-oxoglutarate and oxaloacetate, respectively. Can also hydrolyze gamma-monomethyl-alpha-ketoglutarate in vitro. This Mus musculus (Mouse) protein is Omega-amidase NIT2.